The chain runs to 271 residues: 3-methyl-2-oxobutanoate hydroxymethyltransferase (271 aa).

Mg(2+) contacts are provided by Asp49 and Asp88. Residues 49-50, Asp88, and Lys118 contribute to the 3-methyl-2-oxobutanoate site; that span reads DS. A Mg(2+)-binding site is contributed by Glu120. Glu187 (proton acceptor) is an active-site residue.

Belongs to the PanB family. Homodecamer; pentamer of dimers. The cofactor is Mg(2+).

Its subcellular location is the cytoplasm. The catalysed reaction is 3-methyl-2-oxobutanoate + (6R)-5,10-methylene-5,6,7,8-tetrahydrofolate + H2O = 2-dehydropantoate + (6S)-5,6,7,8-tetrahydrofolate. It functions in the pathway cofactor biosynthesis; (R)-pantothenate biosynthesis; (R)-pantoate from 3-methyl-2-oxobutanoate: step 1/2. Catalyzes the reversible reaction in which hydroxymethyl group from 5,10-methylenetetrahydrofolate is transferred onto alpha-ketoisovalerate to form ketopantoate. The protein is 3-methyl-2-oxobutanoate hydroxymethyltransferase of Bartonella bacilliformis (strain ATCC 35685 / KC583 / Herrer 020/F12,63).